The sequence spans 125 residues: Phosphoribosyl-AMP cyclohydrolase (125 aa).

Aspartate 74 contributes to the Mg(2+) binding site. Cysteine 75 is a Zn(2+) binding site. Mg(2+) contacts are provided by aspartate 76 and aspartate 78. The Zn(2+) site is built by cysteine 92 and cysteine 99.

The protein belongs to the PRA-CH family. As to quaternary structure, homodimer. Mg(2+) is required as a cofactor. Requires Zn(2+) as cofactor.

The protein resides in the cytoplasm. The enzyme catalyses 1-(5-phospho-beta-D-ribosyl)-5'-AMP + H2O = 1-(5-phospho-beta-D-ribosyl)-5-[(5-phospho-beta-D-ribosylamino)methylideneamino]imidazole-4-carboxamide. Its pathway is amino-acid biosynthesis; L-histidine biosynthesis; L-histidine from 5-phospho-alpha-D-ribose 1-diphosphate: step 3/9. In terms of biological role, catalyzes the hydrolysis of the adenine ring of phosphoribosyl-AMP. The polypeptide is Phosphoribosyl-AMP cyclohydrolase (Citrifermentans bemidjiense (strain ATCC BAA-1014 / DSM 16622 / JCM 12645 / Bem) (Geobacter bemidjiensis)).